The sequence spans 303 residues: Large ribosomal subunit protein uL1m (303 aa).

The protein belongs to the universal ribosomal protein uL1 family. In terms of assembly, component of the mitochondrial large ribosomal subunit (mt-LSU). Mature N.crassa 74S mitochondrial ribosomes consist of a small (37S) and a large (54S) subunit. The 37S small subunit contains a 16S ribosomal RNA (16S mt-rRNA) and 32 different proteins. The 54S large subunit contains a 23S rRNA (23S mt-rRNA) and 42 different proteins.

The protein resides in the mitochondrion. In terms of biological role, component of the mitochondrial ribosome (mitoribosome), a dedicated translation machinery responsible for the synthesis of mitochondrial genome-encoded proteins, including at least some of the essential transmembrane subunits of the mitochondrial respiratory chain. The mitoribosomes are attached to the mitochondrial inner membrane and translation products are cotranslationally integrated into the membrane. The protein is Large ribosomal subunit protein uL1m (mrpl1) of Neurospora crassa (strain ATCC 24698 / 74-OR23-1A / CBS 708.71 / DSM 1257 / FGSC 987).